The following is a 549-amino-acid chain: Chaperonin GroEL 3 (549 aa).

Residues 29–32, 86–90, G414, 477–479, and D493 each bind ATP; these read TLGP, DGTTT, and NAA.

It belongs to the chaperonin (HSP60) family. Forms a cylinder of 14 subunits composed of two heptameric rings stacked back-to-back. Interacts with the co-chaperonin GroES.

It is found in the cytoplasm. It catalyses the reaction ATP + H2O + a folded polypeptide = ADP + phosphate + an unfolded polypeptide.. Together with its co-chaperonin GroES, plays an essential role in assisting protein folding. The GroEL-GroES system forms a nano-cage that allows encapsulation of the non-native substrate proteins and provides a physical environment optimized to promote and accelerate protein folding. This is Chaperonin GroEL 3 from Frankia casuarinae (strain DSM 45818 / CECT 9043 / HFP020203 / CcI3).